A 333-amino-acid polypeptide reads, in one-letter code: Tetraacyldisaccharide 4'-kinase (333 aa).

Residue 55–62 (TAGGNGKT) coordinates ATP.

This sequence belongs to the LpxK family.

The catalysed reaction is a lipid A disaccharide + ATP = a lipid IVA + ADP + H(+). The protein operates within glycolipid biosynthesis; lipid IV(A) biosynthesis; lipid IV(A) from (3R)-3-hydroxytetradecanoyl-[acyl-carrier-protein] and UDP-N-acetyl-alpha-D-glucosamine: step 6/6. Transfers the gamma-phosphate of ATP to the 4'-position of a tetraacyldisaccharide 1-phosphate intermediate (termed DS-1-P) to form tetraacyldisaccharide 1,4'-bis-phosphate (lipid IVA). This Proteus mirabilis (strain HI4320) protein is Tetraacyldisaccharide 4'-kinase.